A 356-amino-acid polypeptide reads, in one-letter code: Vesicular integral-membrane protein VIP36 (356 aa).

A signal peptide spans methionine 1–alanine 44. The Lumenal portion of the chain corresponds to aspartate 45 to arginine 322. The 225-residue stretch at glutamate 52 to leucine 276 folds into the L-type lectin-like domain. Residues serine 96 and aspartate 131 each contribute to the a carbohydrate site. Ca(2+)-binding residues include aspartate 162, tyrosine 164, and asparagine 166. Position 164-166 (tyrosine 164–asparagine 166) interacts with a carbohydrate. Asparagine 183 carries N-linked (GlcNAc...) asparagine glycosylation. An a carbohydrate-binding site is contributed by histidine 190. Residue aspartate 193 participates in Ca(2+) binding. Cysteine 202 and cysteine 239 are disulfide-bonded. Glycine 260–leucine 262 serves as a coordination point for a carbohydrate. Residues valine 323–phenylalanine 345 traverse the membrane as a helical segment. The Cytoplasmic portion of the chain corresponds to glutamine 346–tyrosine 356.

Ca(2+) serves as cofactor. In terms of tissue distribution, ubiquitous.

It is found in the endoplasmic reticulum-Golgi intermediate compartment membrane. The protein resides in the golgi apparatus membrane. It localises to the endoplasmic reticulum membrane. Functionally, plays a role as an intracellular lectin in the early secretory pathway. Interacts with N-acetyl-D-galactosamine and high-mannose type glycans and may also bind to O-linked glycans. Involved in the transport and sorting of glycoproteins carrying high mannose-type glycans. This is Vesicular integral-membrane protein VIP36 (LMAN2) from Homo sapiens (Human).